Reading from the N-terminus, the 239-residue chain is Protein G1-like8 (239 aa).

Disordered regions lie at residues 1-35 (MEGG…RYES) and 149-239 (KARG…ATRV). A compositionally biased stretch (low complexity) spans 9-29 (DAQAQAQPVAQAPPAMQPMQQ). The ALOG domain maps to 32–159 (RYESQKRRDW…ARGIPYEKKK (128 aa)). Positions 157-161 (KKKRK) match the Nuclear localization signal motif. Over residues 167–178 (QPPPQPPLPPQH) the composition is skewed to pro residues. Composition is skewed to low complexity over residues 179–215 (QPGA…ATSQ) and 223–239 (TTTT…ATRV).

Belongs to the plant homeotic and developmental regulators ALOG protein family.

It is found in the nucleus. In terms of biological role, probable transcription regulator that acts as a developmental regulator by promoting cell growth in response to light. The polypeptide is Protein G1-like8 (Oryza sativa subsp. indica (Rice)).